A 76-amino-acid chain; its full sequence is Zinc finger protein 706 (76 aa).

The segment covering 1–13 (MARGQQKIQSQQK) has biased composition (low complexity). Disordered stretches follow at residues 1–32 (MARG…QKAA) and 53–76 (TFKQ…DVQA). Positions 14–25 (NAKKQAGQKKKQ) are enriched in basic residues. The segment at 39–62 (YTCTVCRTQMPDPKTFKQHFESKH) adopts a C2H2-type zinc-finger fold. Residues 53–62 (TFKQHFESKH) show a composition bias toward basic and acidic residues.

The protein localises to the cytoplasm. Its subcellular location is the nucleus. In terms of biological role, transcription repressor involved in the exit of embryonic stem cells (ESCs) from self-renewal. Acts by repressing expression of KLF4. This chain is Zinc finger protein 706, found in Homo sapiens (Human).